A 339-amino-acid polypeptide reads, in one-letter code: Anthranilate phosphoribosyltransferase (339 aa).

5-phospho-alpha-D-ribose 1-diphosphate is bound by residues G79, 82–83 (GD), T87, 89–92 (NIST), 107–115 (KHGNRAVSS), and S119. Residue G79 participates in anthranilate binding. Position 91 (S91) interacts with Mg(2+). N110 lines the anthranilate pocket. Anthranilate is bound at residue R165. Positions 224 and 225 each coordinate Mg(2+).

It belongs to the anthranilate phosphoribosyltransferase family. Homodimer. The cofactor is Mg(2+).

The catalysed reaction is N-(5-phospho-beta-D-ribosyl)anthranilate + diphosphate = 5-phospho-alpha-D-ribose 1-diphosphate + anthranilate. Its pathway is amino-acid biosynthesis; L-tryptophan biosynthesis; L-tryptophan from chorismate: step 2/5. Its function is as follows. Catalyzes the transfer of the phosphoribosyl group of 5-phosphorylribose-1-pyrophosphate (PRPP) to anthranilate to yield N-(5'-phosphoribosyl)-anthranilate (PRA). This chain is Anthranilate phosphoribosyltransferase, found in Geobacillus sp. (strain WCH70).